The following is a 358-amino-acid chain: MALLSSTLRAPLVFSKNPKPVSLSSLHSRIYLSPRSPRFPSLRFISAAGDTGDAEKPSSNISDEWGEGSEPETKPFTYFKLPDSDPPKDEDEWGKGAAAGAGSYNDAGNGTPTFAAEASPEAEAEDGVDENLEGLKRSLVDTVYGTELGFRARSEVRAEVSEFVAQLEAANPTPAPVEEPDLLNGNWVLLYTASSELLPLLAAGSLPLLKLDKISQTIDTDSFTVVNSTTLSSPFASFSFSVSASFEVRSPTRIQVTFKEGSLQPPEIKSKIDLPENINIFGQQLSLGPLLQSLGPLENVVANISRVISGQSPLKIPIPGERTSSWLITTYLDKDLRISRGDGGLFVLAREGSSLLDQ.

Residues 1-47 (MALLSSTLRAPLVFSKNPKPVSLSSLHSRIYLSPRSPRFPSLRFISA) constitute a chloroplast transit peptide. The interval 48-114 (AGDTGDAEKP…NDAGNGTPTF (67 aa)) is disordered.

Belongs to the PAP/fibrillin family.

The protein resides in the plastid. Its subcellular location is the chloroplast. Functionally, may form together with other plastoglobulins a coat on the surface of the lipoprotein particle. The coat may contain receptors for attachment to the thylakoid membrane as well as regulatory proteins that may function in the transfer of lipids to and from the thylakoid membranes. This chain is Plastoglobulin-1, chloroplastic (PG1), found in Pisum sativum (Garden pea).